The primary structure comprises 235 residues: METTKLGNLKLYGAGHAAGGAYHNVSIKGEGIVGEGLSAVGCRIYGTGLFLGKAETERLRVLGESECKGDLTAGKINIYGTMKVSGSLQFDRFNLKGQTEIGGNMTGESCDVKGKLSVIGDCETEMFHVTGCVDVSGLLNSGEIKLGLSHDISHVQEIGGTTITVKRRASFFSRKKGKLIADVIEGDRVYLENTEAAVVRGKEVIIGPGCSIGTIEYEYKCECDPHSQIKEKTKL.

This is an uncharacterized protein from Bacillus subtilis (strain 168).